Reading from the N-terminus, the 249-residue chain is Probable transcriptional regulatory protein ERGA_CDS_03720 (249 aa).

The segment at 1 to 21 (MAGHSQFANIKHRKGAQDAKR) is disordered.

It belongs to the TACO1 family.

The protein resides in the cytoplasm. In Ehrlichia ruminantium (strain Gardel), this protein is Probable transcriptional regulatory protein ERGA_CDS_03720.